Consider the following 191-residue polypeptide: Inosine triphosphate pyrophosphatase (191 aa).

Thr12–Lys17 contributes to the ITP binding site. Glu40 is a binding site for Mg(2+). Residues Lys52, Asp68–Ser69, Lys85, Phe144–Glu147, Lys167, and His172–Arg173 contribute to the ITP site.

This sequence belongs to the HAM1 NTPase family. As to quaternary structure, homodimer. The cofactor is Mg(2+). Mn(2+) is required as a cofactor.

It localises to the cytoplasm. The protein localises to the nucleus. The enzyme catalyses ITP + H2O = IMP + diphosphate + H(+). It carries out the reaction dITP + H2O = dIMP + diphosphate + H(+). The catalysed reaction is XTP + H2O = XMP + diphosphate + H(+). Functionally, pyrophosphatase that hydrolyzes non-canonical purine nucleotides such as inosine triphosphate (ITP), deoxyinosine triphosphate (dITP) or xanthosine 5'-triphosphate (XTP) to their respective monophosphate derivatives. The enzyme does not distinguish between the deoxy- and ribose forms. Probably excludes non-canonical purines from RNA and DNA precursor pools, thus preventing their incorporation into RNA and DNA and avoiding chromosomal lesions. The protein is Inosine triphosphate pyrophosphatase of Aspergillus oryzae (strain ATCC 42149 / RIB 40) (Yellow koji mold).